Here is a 206-residue protein sequence, read N- to C-terminus: MTSKSVVVLDYGSGNLRSAQRALERVGASVQVTADADAAAAADGLVVPGVGAYEACMTGLRKIGGDRIIAERVAAGRPVLGVCVGMQILFARGVEFSVETSGCGQWPGSVTRLQAPVIPHMGWNVVESGPDSVLFRGLDADTRFYFVHSYAAQQWEGSPEAVLTWSRHEGPFLAAVEDGPLSATQFHPEKSGDAGAAVLRNWIERL.

The Glutamine amidotransferase type-1 domain maps to 5–206 (SVVVLDYGSG…AVLRNWIERL (202 aa)). The active-site Nucleophile is the Cys-83. Active-site residues include His-187 and Glu-189.

Heterodimer of HisH and HisF.

The protein localises to the cytoplasm. The enzyme catalyses 5-[(5-phospho-1-deoxy-D-ribulos-1-ylimino)methylamino]-1-(5-phospho-beta-D-ribosyl)imidazole-4-carboxamide + L-glutamine = D-erythro-1-(imidazol-4-yl)glycerol 3-phosphate + 5-amino-1-(5-phospho-beta-D-ribosyl)imidazole-4-carboxamide + L-glutamate + H(+). It catalyses the reaction L-glutamine + H2O = L-glutamate + NH4(+). The protein operates within amino-acid biosynthesis; L-histidine biosynthesis; L-histidine from 5-phospho-alpha-D-ribose 1-diphosphate: step 5/9. Functionally, IGPS catalyzes the conversion of PRFAR and glutamine to IGP, AICAR and glutamate. The HisH subunit catalyzes the hydrolysis of glutamine to glutamate and ammonia as part of the synthesis of IGP and AICAR. The resulting ammonia molecule is channeled to the active site of HisF. The protein is Imidazole glycerol phosphate synthase subunit HisH of Mycolicibacterium paratuberculosis (strain ATCC BAA-968 / K-10) (Mycobacterium paratuberculosis).